The following is a 131-amino-acid chain: Peptide methionine sulfoxide reductase MsrB (131 aa).

Residues 8 to 130 (LEEWKEMLDP…NSVCLDLVPR (123 aa)) form the MsrB domain. 4 residues coordinate Zn(2+): C47, C50, C96, and C99. The active-site Nucleophile is the C119.

It belongs to the MsrB Met sulfoxide reductase family. Zn(2+) serves as cofactor.

The enzyme catalyses L-methionyl-[protein] + [thioredoxin]-disulfide + H2O = L-methionyl-(R)-S-oxide-[protein] + [thioredoxin]-dithiol. In Pseudomonas savastanoi pv. phaseolicola (strain 1448A / Race 6) (Pseudomonas syringae pv. phaseolicola (strain 1448A / Race 6)), this protein is Peptide methionine sulfoxide reductase MsrB.